We begin with the raw amino-acid sequence, 957 residues long: Calsyntenin-3 (957 aa).

The N-terminal stretch at 1–19 is a signal peptide; the sequence is MTLLLVSLLLASLLQISSG. The Cytoplasmic segment spans residues 1–21; sequence MTLLLVSLLLASLLQISSGNK. Residues 20–848 are Extracellular-facing; sequence NKANKHKPWI…SHRNSMVPSA (829 aa). Residues 22 to 42 constitute an intramembrane region (helical); sequence ANKHKPWIEAEYQGIVMENDN. Cadherin domains follow at residues 29 to 145 and 146 to 246; these read IEAE…APVF and VERL…KPSW. The Cytoplasmic segment spans residues 43–73; the sequence is TVLLNPPLFALDKDAPLRYAGEICGFRLHGS. The helical intramembrane region spans 74–94; it reads GVPFKAVILDKATGEGLIRAK. The Cytoplasmic portion of the chain corresponds to 95–139; that stretch reads EPVDCEAQKEHTFTTQAYDCVDGPDGANTKKSHKATVHVRVNDVN. An intramembrane region (helical) is located at residues 140 to 160; that stretch reads EFAPVFVERLYRAAVTEGKLY. At 161–248 the chain is on the cytoplasmic side; it reads DRILRVEAID…KPTCKPSWQG (88 aa). The chain crosses the membrane as a helical span at residues 249-269; it reads WNKRIEYAPGAGSLALFPGIR. The Lumenal portion of the chain corresponds to 270–357; it reads LETCDEPLWN…GTQAVQVPLG (88 aa). 5 N-linked (GlcNAc...) asparagine glycosylation sites follow: Asn-299, Asn-327, Asn-347, Asn-508, and Asn-741. The helical transmembrane segment at 849-869 threads the bilayer; the sequence is ATLIIVVCVGFLVLMVILGLV. At 870 to 957 the chain is on the cytoplasmic side; it reads RIHSLHRRVS…RIIESPPHRY (88 aa). Positions 916–957 are disordered; sequence QQTGVAGVAGGQQEEEDSSDSEAADSPSSDERRIIESPPHRY. Residues 928–938 are compositionally biased toward acidic residues; the sequence is QEEEDSSDSEA. Basic and acidic residues predominate over residues 944 to 957; it reads SDERRIIESPPHRY.

The protein belongs to the calsyntenin family. Interacts (via cadherin domains) with both alpha and beta isoforms of neurexins (NRXN1, NRXN2 and NRXN3). Directly interacts with APBA2. Forms a tripartite complex with APBA2 and APP. Interacts with low affinity with KLC1. Interacts with SLC23A2/SVCT2. As to quaternary structure, interacts with CIDEA; inhibiting the lipid transferase activity of CIDEA. Interacts with CIDEC; inhibiting the lipid transferase activity of CIDEC. Proteolytically processed under normal cellular conditions. A primary zeta-cleavage generates a large extracellular (soluble) N-terminal domain (sAlc) and a short C-terminal transmembrane fragment (CTF1). A secondary cleavage catalyzed by gamma-secretase within the transmembrane domain releases the beta-Alc-beta chain in the extracellular milieu and produces an intracellular fragment (AlcICD). This processing is strongly suppressed in the tripartite complex formed with APBA2 and APP, which seems to prevent the association with gamma-secretase. In terms of processing, ubiquitinated: endoplasmic reticulum-localized protein is ubiquitinated and degraded by the endoplasmic reticulum-associated degradation (ERAD) pathway.

It is found in the postsynaptic cell membrane. It localises to the endoplasmic reticulum membrane. The protein resides in the golgi apparatus membrane. The protein localises to the cell projection. Its subcellular location is the dendrite. It is found in the lipid droplet. Functionally, postsynaptic adhesion molecule that binds to presynaptic neurexins to mediate both excitatory and inhibitory synapse formation. Promotes synapse development by acting as a cell adhesion molecule at the postsynaptic membrane, which associates with both neurexin-alpha and neurexin-beta proteins at the presynaptic membrane. Regulates the balance between excitatory and inhibitory synapses by inhibiting formation of excitatory parallel-fiber synapses and promoting formation of inhibitory synapses in the same neuron. May also be involved in ascorbate (vitamin C) uptake via its interaction with SLC23A2/SVCT2. Complex formation with APBA2 and APP, stabilizes APP metabolism and enhances APBA2-mediated suppression of beta-APP40 secretion, due to the retardation of intracellular APP maturation. Its function is as follows. Adipose-specific isoform that plays a key role in adaptive thermogenesis. Facilitates the efficient use of stored triglyceride by promoting multilocular morphology of thermogenic adipocytes: acts by inhibiting the activity of CIDEA and CIDEC on lipid droplets, thereby preventing lipid droplet fusion and facilitating lipid utilization. May also participate in adaptive thermogenesis by promoting sympathetic innervation of thermogenic adipose tissue: acts by driving secretion of neurotrophic factor S100B from brown adipocytes, stimulating neurite outgrowth from sympathetic neurons. This is Calsyntenin-3 from Rattus norvegicus (Rat).